Reading from the N-terminus, the 578-residue chain is Arginine--tRNA ligase (578 aa).

Residues 127-137 (PNLAKEMHVGH) carry the 'HIGH' region motif.

The protein belongs to the class-I aminoacyl-tRNA synthetase family. Monomer.

Its subcellular location is the cytoplasm. The enzyme catalyses tRNA(Arg) + L-arginine + ATP = L-arginyl-tRNA(Arg) + AMP + diphosphate. This Pseudomonas fluorescens (strain Pf0-1) protein is Arginine--tRNA ligase.